Reading from the N-terminus, the 23-residue chain is Clavanin-B (23 aa).

At Phe-23 the chain carries Phenylalanine amide.

Its subcellular location is the secreted. In terms of biological role, has antimicrobial activity. This Styela clava (Sea squirt) protein is Clavanin-B.